Consider the following 184-residue polypeptide: Protein DESIGUAL 3 (184 aa).

The first 24 residues, 1–24, serve as a signal peptide directing secretion; it reads MESELGFLVSVVIICADITATVLG. The span at 34 to 45 shows a compositional bias: basic residues; the sequence is APHHHHQQHSRH. A disordered region spans residues 34–53; sequence APHHHHQQHSRHSGSGCRRS. Transmembrane regions (helical) follow at residues 62–82, 99–119, and 140–160; these read GVAAMVLLFIVHVLANVLGGC, ILAVAFLVLSWIFFVVSYSTL, and FFLIGGIFCLGHGVVTSAYYV. N-linked (GlcNAc...) asparagine glycosylation is present at Asn-180.

The protein belongs to the DESIGUAL family. Mainly expressed in roots, inflorescences and developing leaves, and, at low levels, in mature leaves.

It is found in the endoplasmic reticulum membrane. Functionally, involved, partially redundantly with VCC/DEAL1 and DEAL2, to ensure bilateral symmetry development and early leaf margin patterning, probably via the regulation of auxin and CUC2 distribution. The protein is Protein DESIGUAL 3 of Arabidopsis thaliana (Mouse-ear cress).